The chain runs to 156 residues: ATP synthase subunit b (156 aa).

A helical membrane pass occupies residues 4 to 26; the sequence is GATFWGPMISFALFVWFTMKFVW.

This sequence belongs to the ATPase B chain family. In terms of assembly, F-type ATPases have 2 components, F(1) - the catalytic core - and F(0) - the membrane proton channel. F(1) has five subunits: alpha(3), beta(3), gamma(1), delta(1), epsilon(1). F(0) has three main subunits: a(1), b(2) and c(10-14). The alpha and beta chains form an alternating ring which encloses part of the gamma chain. F(1) is attached to F(0) by a central stalk formed by the gamma and epsilon chains, while a peripheral stalk is formed by the delta and b chains.

Its subcellular location is the cell inner membrane. In terms of biological role, f(1)F(0) ATP synthase produces ATP from ADP in the presence of a proton or sodium gradient. F-type ATPases consist of two structural domains, F(1) containing the extramembraneous catalytic core and F(0) containing the membrane proton channel, linked together by a central stalk and a peripheral stalk. During catalysis, ATP synthesis in the catalytic domain of F(1) is coupled via a rotary mechanism of the central stalk subunits to proton translocation. Component of the F(0) channel, it forms part of the peripheral stalk, linking F(1) to F(0). This Halorhodospira halophila (strain DSM 244 / SL1) (Ectothiorhodospira halophila (strain DSM 244 / SL1)) protein is ATP synthase subunit b.